The chain runs to 504 residues: Signal recognition particle subunit SRP54 (504 aa).

An NG domain region spans residues 1–295 (MVLADLGRKI…KTQPFISKLL (295 aa)). GTP contacts are provided by residues 108–115 (GLQGSGKT), 190–194 (DTSGR), and 248–251 (TKLD). The segment at 296–504 (GMGDIEGLID…MKGMMGFNNM (209 aa)) is M-domain.

Belongs to the GTP-binding SRP family. SRP54 subfamily. As to quaternary structure, component of a signal recognition particle (SRP) complex that consists of a 7SL RNA molecule of 300 nucleotides and six protein subunits: SRP72, SRP68, SRP54, SRP19, SRP14 and SRP9. Interacts with RNPS1. Interacts with the SRP receptor subunit SRPRA.

The protein localises to the nucleus speckle. It is found in the cytoplasm. It localises to the endoplasmic reticulum. The enzyme catalyses GTP + H2O = GDP + phosphate + H(+). Functionally, component of the signal recognition particle (SRP) complex, a ribonucleoprotein complex that mediates the cotranslational targeting of secretory and membrane proteins to the endoplasmic reticulum (ER). As part of the SRP complex, associates with the SRP receptor (SR) component SRPRA to target secretory proteins to the endoplasmic reticulum membrane. Binds to the signal sequence of presecretory proteins when they emerge from the ribosomes. Displays basal GTPase activity, and stimulates reciprocal GTPase activation of the SR subunit SRPRA. Forms a guanosine 5'-triphosphate (GTP)-dependent complex with the SR subunit SRPRA. SR compaction and GTPase mediated rearrangement of SR drive SRP-mediated cotranslational protein translocation into the ER. Requires the presence of SRP9/SRP14 and/or SRP19 to stably interact with RNA. Plays a role in proliferation and differentiation of granulocytic cells, neutrophils migration capacity and exocrine pancreas development. The chain is Signal recognition particle subunit SRP54 from Homo sapiens (Human).